A 287-amino-acid chain; its full sequence is Elongation factor Ts (287 aa).

An involved in Mg(2+) ion dislocation from EF-Tu region spans residues 80–83 (TDFL).

It belongs to the EF-Ts family.

The protein resides in the cytoplasm. Its function is as follows. Associates with the EF-Tu.GDP complex and induces the exchange of GDP to GTP. It remains bound to the aminoacyl-tRNA.EF-Tu.GTP complex up to the GTP hydrolysis stage on the ribosome. The chain is Elongation factor Ts from Pseudomonas putida (strain W619).